The primary structure comprises 527 residues: Zinc finger CCCH-type with G patch domain-containing protein (527 aa).

A disordered region spans residues 97 to 126 (GEVSGSSSDMREREDEREEEDDGEVEGEVD). A compositionally biased stretch (acidic residues) spans 111–125 (DEREEEDDGEVEGEV). The segment at 173-200 (QKSMKPCPFFLEDKCRFADNCRFSHGEV) adopts a C3H1-type zinc-finger fold. Positions 268-312 (LREDDLPSCSDSEDDDNGEGEAAFPRVLTQEEDWAPSRSSSAFGG) are disordered. Residues 317–363 (TRGIGSKLMLKMGYEYGKGLGKTSEGRVEPVLAVVLPKGKSLDQCAE) form the G-patch domain. Disordered regions lie at residues 369–396 (TQRK…AHNT), 410–444 (LGNG…YKGG), and 505–527 (KAQE…MTEF). A compositionally biased stretch (basic residues) spans 384–393 (RNKRTRKARA). The span at 511 to 527 (AQRENRKADTHKKMTEF) shows a compositional bias: basic and acidic residues.

Its subcellular location is the nucleus. Functionally, transcription repressor that specifically binds the 5'-GGAG[GA]A[GA]A-3' consensus sequence. Represses transcription by recruiting the chromatin multiprotein complex NuRD to target promoters. Negatively regulates expression of EGFR, a gene involved in cell proliferation, survival and migration. This is Zinc finger CCCH-type with G patch domain-containing protein (zgpat) from Salmo salar (Atlantic salmon).